The primary structure comprises 369 residues: Anhydro-N-acetylmuramic acid kinase (369 aa).

12–19 provides a ligand contact to ATP; sequence GTSLDGVD.

Belongs to the anhydro-N-acetylmuramic acid kinase family.

It catalyses the reaction 1,6-anhydro-N-acetyl-beta-muramate + ATP + H2O = N-acetyl-D-muramate 6-phosphate + ADP + H(+). The protein operates within amino-sugar metabolism; 1,6-anhydro-N-acetylmuramate degradation. Its pathway is cell wall biogenesis; peptidoglycan recycling. In terms of biological role, catalyzes the specific phosphorylation of 1,6-anhydro-N-acetylmuramic acid (anhMurNAc) with the simultaneous cleavage of the 1,6-anhydro ring, generating MurNAc-6-P. Is required for the utilization of anhMurNAc either imported from the medium or derived from its own cell wall murein, and thus plays a role in cell wall recycling. This chain is Anhydro-N-acetylmuramic acid kinase, found in Escherichia coli O139:H28 (strain E24377A / ETEC).